The sequence spans 128 residues: Arsenic resistance transcriptional regulator ArsR1 (128 aa).

The HTH arsR-type domain maps to 11–103; sequence MREILTPPIV…AMLKGVVDAN (93 aa). C43 and C45 together coordinate arsenite. The segment at residues 44–67 is a DNA-binding region (H-T-H motif); sequence VCELTHALELSQPKISRHLAQLRE.

Homodimer.

It is found in the cytoplasm. Binds arsenite and regulates the expression of arsenic efflux pumps. In vitro, also binds antimony and bismuth, but not arsenate. This Pseudomonas putida (strain ATCC 47054 / DSM 6125 / CFBP 8728 / NCIMB 11950 / KT2440) protein is Arsenic resistance transcriptional regulator ArsR1.